Consider the following 434-residue polypeptide: Beta-enolase (434 aa).

At A2 the chain carries N-acetylalanine. T72 bears the Phosphothreonine mark. Residues S83 and S157 each carry the phosphoserine modification. 2 residues coordinate substrate: H158 and E167. S176 carries the phosphoserine modification. T205 carries the post-translational modification Phosphothreonine. The active-site Proton donor is E210. T229 carries the phosphothreonine modification. A Phosphotyrosine modification is found at Y236. Position 245 (D245) interacts with Mg(2+). A Phosphoserine modification is found at S263. Substrate is bound by residues E293 and D318. The Mg(2+) site is built by E293 and D318. K343 (proton acceptor) is an active-site residue. Substrate is bound by residues 370 to 373 (SHRS) and K394.

Belongs to the enolase family. As to quaternary structure, mammalian enolase is composed of 3 isozyme subunits, alpha, beta and gamma, which can form homodimers or heterodimers which are cell-type and development-specific. Interacts with PNKD. Mg(2+) serves as cofactor. In terms of tissue distribution, the alpha/alpha homodimer is expressed in embryo and in most adult tissues. The alpha/beta heterodimer and the beta/beta homodimer are found in striated muscle, and the alpha/gamma heterodimer and the gamma/gamma homodimer in neurons.

Its subcellular location is the cytoplasm. The enzyme catalyses (2R)-2-phosphoglycerate = phosphoenolpyruvate + H2O. The protein operates within carbohydrate degradation; glycolysis; pyruvate from D-glyceraldehyde 3-phosphate: step 4/5. Functionally, glycolytic enzyme that catalyzes the conversion of 2-phosphoglycerate to phosphoenolpyruvate. Appears to have a function in striated muscle development and regeneration. In Oryctolagus cuniculus (Rabbit), this protein is Beta-enolase (ENO3).